The sequence spans 309 residues: Tyrosine recombinase XerD (309 aa).

One can recognise a Core-binding (CB) domain in the interval 3–88 (MRASLAIENF…ALRQFFRFLY (86 aa)). The region spanning 109–302 (PLPKIMSVEN…LEERLHKLVS (194 aa)) is the Tyr recombinase domain. Residues Arg158, Lys182, His254, Arg257, and His280 contribute to the active site. Residue Tyr289 is the O-(3'-phospho-DNA)-tyrosine intermediate of the active site.

This sequence belongs to the 'phage' integrase family. XerD subfamily. Forms a cyclic heterotetrameric complex composed of two molecules of XerC and two molecules of XerD.

The protein localises to the cytoplasm. In terms of biological role, site-specific tyrosine recombinase, which acts by catalyzing the cutting and rejoining of the recombining DNA molecules. The XerC-XerD complex is essential to convert dimers of the bacterial chromosome into monomers to permit their segregation at cell division. It also contributes to the segregational stability of plasmids. This is Tyrosine recombinase XerD from Brucella melitensis biotype 1 (strain ATCC 23456 / CCUG 17765 / NCTC 10094 / 16M).